Here is a 32-residue protein sequence, read N- to C-terminus: MSDIN-like toxin proprotein 2 (32 aa).

A propeptide spanning residues Met-1 to Pro-10 is cleaved from the precursor. Residues Ala-11 to Pro-17 constitute a cross-link (cyclopeptide (Ala-Pro)). A propeptide spanning residues Cys-18–Lys-32 is cleaved from the precursor.

This sequence belongs to the MSDIN fungal toxin family. Processed by the macrocyclase-peptidase enzyme POPB to yield a toxic cyclic heptapeptide. POPB first removes 10 residues from the N-terminus. Conformational trapping of the remaining peptide forces the enzyme to release this intermediate rather than proceed to macrocyclization. The enzyme rebinds the remaining peptide in a different conformation and catalyzes macrocyclization of the N-terminal 7 residues.

In terms of biological role, probable toxin that belongs to the MSDIN-like toxin family responsible for a large number of food poisoning cases and deaths. This Amanita rimosa protein is MSDIN-like toxin proprotein 2.